The primary structure comprises 334 residues: N-acetyl-gamma-glutamyl-phosphate reductase (334 aa).

C149 is an active-site residue.

The protein belongs to the NAGSA dehydrogenase family. Type 1 subfamily.

The protein localises to the cytoplasm. It carries out the reaction N-acetyl-L-glutamate 5-semialdehyde + phosphate + NADP(+) = N-acetyl-L-glutamyl 5-phosphate + NADPH + H(+). The protein operates within amino-acid biosynthesis; L-arginine biosynthesis; N(2)-acetyl-L-ornithine from L-glutamate: step 3/4. Its function is as follows. Catalyzes the NADPH-dependent reduction of N-acetyl-5-glutamyl phosphate to yield N-acetyl-L-glutamate 5-semialdehyde. This chain is N-acetyl-gamma-glutamyl-phosphate reductase, found in Sulfurimonas denitrificans (strain ATCC 33889 / DSM 1251) (Thiomicrospira denitrificans (strain ATCC 33889 / DSM 1251)).